A 473-amino-acid polypeptide reads, in one-letter code: Eukaryotic translation initiation factor 2 subunit gamma (473 aa).

The tr-type G domain occupies 40–250 (QATINIGTIG…AICNIAPPNY (211 aa)). Positions 49 to 56 (GHVAHGKS) are G1. Residue 52–57 (AHGKSS) participates in GTP binding. The segment at 77–81 (NITIK) is G2. Positions 135 to 138 (DCPG) are G3. GTP contacts are provided by residues 193 to 196 (NKMD) and 228 to 230 (SAQ). Residues 193–196 (NKMD) are G4. Residues 228–230 (SAQ) form a G5 region. Residues 458–470 (GKVRSGGTLCEVV) are interacts with CDC123.

Belongs to the TRAFAC class translation factor GTPase superfamily. Classic translation factor GTPase family. EIF2G subfamily. Eukaryotic translation initiation factor 2 eIF2 is a heterotrimeric complex composed of an alpha, a beta and a gamma subunit. The factors eIF-1, eIF-2, eIF-3, TIF5/eIF-5 and methionyl-tRNAi form a multifactor complex (MFC) that may bind to the 40S ribosome.

The protein localises to the cytoplasm. Its subcellular location is the cytosol. It catalyses the reaction GTP + H2O = GDP + phosphate + H(+). As a subunit of eukaryotic initiation factor 2 eIF2, involved in the early steps of protein synthesis. In the presence of GTP, eIF-2 forms a ternary complex with initiator tRNA Met-tRNAi and then recruits the 40S ribosomal complex and initiation factors eIF-1, eIF-1A and eIF-3 to form the 43S pre-initiation complex (43S PIC), a step that determines the rate of protein translation. The 43S PIC binds to mRNA and scans downstream to the initiation codon, where it forms a 48S initiation complex by codon-anticodon base pairing. This leads to the displacement of eIF-1 to allow GTPase-activating protein (GAP) eIF-5-mediated hydrolysis of eIF2-bound GTP. Hydrolysis of GTP and release of Pi, which makes GTP hydrolysis irreversible, causes the release of the eIF-2-GDP binary complex from the 40S subunit, an event that is essential for the subsequent joining of the 60S ribosomal subunit to form an elongation-competent 80S ribosome. In order for eIF-2 to recycle and catalyze another round of initiation, the GDP bound to eIF-2 must be exchanged with GTP by way of a reaction catalyzed by GDP-GTP exchange factor (GEF) eIF-2B. This chain is Eukaryotic translation initiation factor 2 subunit gamma, found in Cryptococcus neoformans var. grubii serotype A (strain H99 / ATCC 208821 / CBS 10515 / FGSC 9487) (Filobasidiella neoformans var. grubii).